Reading from the N-terminus, the 553-residue chain is Transcriptional regulator HilA (553 aa).

A DNA-binding region (ompR/PhoB-type) is located at residues 11-107 (NKKFVFDDFI…LYGQGYRFNR (97 aa)). Asp62 carries the post-translational modification 4-aspartylphosphate. One copy of the TPR repeat lies at 372–405 (ADIKYYYGWNLFMAGQLEEALQTINECLKLDPTR).

The main transcriptional regulator of the Salmonella pathogenicity island 1 (SPI1) gene expression. Activates the expression of invasion genes by a direct action at their promoters and also indirectly by increasing the level of InvF. Also binds upstream of prgH and directly activates the expression of prgHIJK operon. In Salmonella typhimurium (strain LT2 / SGSC1412 / ATCC 700720), this protein is Transcriptional regulator HilA (hilA).